The primary structure comprises 63 residues: Kappa-theraphotoxin-Cg3a 1 (63 aa).

A signal peptide spans 1–21; it reads MKNTSILFILGLALLLVLAFE. A propeptide spanning residues 22–29 is cleaved from the precursor; that stretch reads VQVGESDG. 3 cysteine pairs are disulfide-bonded: C31-C46, C38-C51, and C45-C58.

This sequence belongs to the neurotoxin 10 (Hwtx-1) family. 44 (Jztx-4) subfamily. As to expression, expressed by the venom gland.

Its subcellular location is the secreted. Gating modifier of Kv2.1/KCNB1, Kv2.2/KCNB2 and Kv4.3/KCND3 channels. This Chilobrachys guangxiensis (Chinese earth tiger tarantula) protein is Kappa-theraphotoxin-Cg3a 1.